The chain runs to 761 residues: MFCSLRNFLHVNRRFPRHVSPSSSSLSQIQSPLCFPLSSPSPSQSSFISCPFVWFTSFLCIIRYPFVTKSGTSTYSEDFDRDWIRKVVHNDLWDDPGLEKLFDLTLAPIWVPRVLVELKEDPKLAFKFFKWSMTRNGFKHSVESYCIVAHILFCARMYYDANSVLKEMVLSKADCDVFDVLWSTRNVCVPGFGVFDALFSVLIDLGMLEEAIQCFSKMKRFRVFPKTRSCNGLLHRFAKLGKTDDVKRFFKDMIGAGARPTVFTYNIMIDCMCKEGDVEAARGLFEEMKFRGLVPDTVTYNSMIDGFGKVGRLDDTVCFFEEMKDMCCEPDVITYNALINCFCKFGKLPIGLEFYREMKGNGLKPNVVSYSTLVDAFCKEGMMQQAIKFYVDMRRVGLVPNEYTYTSLIDANCKIGNLSDAFRLGNEMLQVGVEWNVVTYTALIDGLCDAERMKEAEELFGKMDTAGVIPNLASYNALIHGFVKAKNMDRALELLNELKGRGIKPDLLLYGTFIWGLCSLEKIEAAKVVMNEMKECGIKANSLIYTTLMDAYFKSGNPTEGLHLLDEMKELDIEVTVVTFCVLIDGLCKNKLVSKAVDYFNRISNDFGLQANAAIFTAMIDGLCKDNQVEAATTLFEQMVQKGLVPDRTAYTSLMDGNFKQGNVLEALALRDKMAEIGMKLDLLAYTSLVWGLSHCNQLQKARSFLEEMIGEGIHPDEVLCISVLKKHYELGCIDEAVELQSYLMKHQLLTSDNDNALPNM.

17 PPR repeats span residues 141-175 (SVES…KADC), 191-225 (GFGV…RVFP), 226-260 (KTRS…GARP), 261-295 (TVFT…GLVP), 296-330 (DTVT…CCEP), 331-365 (DVIT…GLKP), 366-400 (NVVS…GLVP), 401-435 (NEYT…GVEW), 436-470 (NVVT…GVIP), 471-505 (NLAS…GIKP), 506-540 (DLLL…GIKA), 541-575 (NSLI…DIEV), 576-606 (TVVT…ISND), 612-646 (NAAI…GLVP), 647-681 (DRTA…GMKL), 682-716 (DLLA…GIHP), and 717-751 (DEVL…QLLT).

Belongs to the PPR family. P subfamily.

This is Putative pentatricopeptide repeat-containing protein At2g02150 from Arabidopsis thaliana (Mouse-ear cress).